The sequence spans 206 residues: Large ribosomal subunit protein uL13w (206 aa).

The protein belongs to the universal ribosomal protein uL13 family.

The polypeptide is Large ribosomal subunit protein uL13w (RPL13AD) (Arabidopsis thaliana (Mouse-ear cress)).